The following is a 337-amino-acid chain: MKAPAFWYAPPGTARPLLSALLTPAALAWTAATRRRLSGTRPWHAPVPVICVGNLVAGGAGKTPVVLDLLSRLRRGGLDAHALSRGHGGRLPGPLRVDPARHTAAEVGDEPLLLAAAAPAWIARDRAAGARAAADAGAGVLVLDDGFQNPGIAKDLSLLVVDGDAGFGNGRVIPAGPLREPVADGLARAQAVLLLGEDRRGTADLCRGRLPVLRGRLVPDPQAAADLEGRRVLAFAGIGRPEKLFRTLEALGADVVARLPFPDHHPFTAAELRALLDRAAALDALPVTTQKDLVRLPAELRGQVRALPVSIAWEEPDTLDRLLAPLLSGKDDHGQAQ.

56–63 (VAGGAGKT) is a binding site for ATP.

Belongs to the LpxK family.

It carries out the reaction a lipid A disaccharide + ATP = a lipid IVA + ADP + H(+). Its pathway is glycolipid biosynthesis; lipid IV(A) biosynthesis; lipid IV(A) from (3R)-3-hydroxytetradecanoyl-[acyl-carrier-protein] and UDP-N-acetyl-alpha-D-glucosamine: step 6/6. Its function is as follows. Transfers the gamma-phosphate of ATP to the 4'-position of a tetraacyldisaccharide 1-phosphate intermediate (termed DS-1-P) to form tetraacyldisaccharide 1,4'-bis-phosphate (lipid IVA). The sequence is that of Tetraacyldisaccharide 4'-kinase from Rhodospirillum centenum (strain ATCC 51521 / SW).